A 77-amino-acid polypeptide reads, in one-letter code: NAD(P)H-quinone oxidoreductase subunit L (77 aa).

A run of 2 helical transmembrane segments spans residues 10 to 30 and 48 to 68; these read LLIA…LPAG and LVMY…SPFL.

It belongs to the complex I NdhL subunit family. As to quaternary structure, NDH-1 can be composed of about 15 different subunits; different subcomplexes with different compositions have been identified which probably have different functions.

The protein localises to the cellular thylakoid membrane. It carries out the reaction a plastoquinone + NADH + (n+1) H(+)(in) = a plastoquinol + NAD(+) + n H(+)(out). It catalyses the reaction a plastoquinone + NADPH + (n+1) H(+)(in) = a plastoquinol + NADP(+) + n H(+)(out). Functionally, NDH-1 shuttles electrons from an unknown electron donor, via FMN and iron-sulfur (Fe-S) centers, to quinones in the respiratory and/or the photosynthetic chain. The immediate electron acceptor for the enzyme in this species is believed to be plastoquinone. Couples the redox reaction to proton translocation, and thus conserves the redox energy in a proton gradient. Cyanobacterial NDH-1 also plays a role in inorganic carbon-concentration. In Picosynechococcus sp. (strain ATCC 27264 / PCC 7002 / PR-6) (Agmenellum quadruplicatum), this protein is NAD(P)H-quinone oxidoreductase subunit L.